Reading from the N-terminus, the 207-residue chain is Nudix hydrolase 4 (207 aa).

The region spanning 58-194 is the Nudix hydrolase domain; that stretch reads GYRQVVGCVP…WMREALEAFI (137 aa). The Nudix box motif lies at 101–122; that stretch reads GGWETDESMEEAALRETIEEAG. Positions 116 and 120 each coordinate Mg(2+).

This sequence belongs to the Nudix hydrolase family. It depends on Mg(2+) as a cofactor. Requires Mn(2+) as cofactor. In terms of tissue distribution, expressed in roots, stems and leaves.

It catalyses the reaction ADP-D-ribose + H2O = D-ribose 5-phosphate + AMP + 2 H(+). The enzyme catalyses NAD(+) + H2O = beta-nicotinamide D-ribonucleotide + AMP + 2 H(+). It carries out the reaction NADH + H2O = reduced beta-nicotinamide D-ribonucleotide + AMP + 2 H(+). Probably mediates the hydrolysis of some nucleoside diphosphate derivatives. In vitro, it can use both NADH and ADP-ribose as substrates; however the relevance of such substrates in vivo is unclear. This Arabidopsis thaliana (Mouse-ear cress) protein is Nudix hydrolase 4 (NUDT4).